A 415-amino-acid polypeptide reads, in one-letter code: MQQDYLSQQRFSALPLHPIVRGALAKKGFDFCTPIQALSLPISLNGRDVAGQAQTGTGKTMAFLTATFHHLLTHQDPNLKYPHPRALILAPTRELAVQISNDAEFLAKASGLKTALAYGGDGYDKQLQAIERGVDILIGTTGRVIDYVKQGVIGLDEIQVVVLDEADRMFDLGFIRDIRYLLRKCPAPQARLTMLFSATLSYKVRELAFEDMNEPEYIEIEPEQKTGHRIKEELFYPSNQDKMALLLTLMEDEWPERCIVFANTKHRCEEIWGYLAADGHRVGLLTGDVAQKKRLSLLKQFTDGDLDILVATDVAARGLHISDVTHVFNYDLPDDREDYVHRIGRTGRAGESGVSISFACEEYAMNLPAIEEYIGHSIPVSQYETEALLELPKPYRLKRAVPPQGHTRHRSYHAK.

Positions 9-37 (QRFSALPLHPIVRGALAKKGFDFCTPIQA) match the Q motif motif. One can recognise a Helicase ATP-binding domain in the interval 40–218 (LPISLNGRDV…FEDMNEPEYI (179 aa)). 53 to 60 (AQTGTGKT) contributes to the ATP binding site. The short motif at 164-167 (DEAD) is the DEAD box element. Residues 241-389 (DKMALLLTLM…VSQYETEALL (149 aa)) form the Helicase C-terminal domain.

This sequence belongs to the DEAD box helicase family. RhlB subfamily. In terms of assembly, component of the RNA degradosome, which is a multiprotein complex involved in RNA processing and mRNA degradation.

The protein localises to the cytoplasm. It carries out the reaction ATP + H2O = ADP + phosphate + H(+). DEAD-box RNA helicase involved in RNA degradation. Has RNA-dependent ATPase activity and unwinds double-stranded RNA. In Haemophilus influenzae (strain ATCC 51907 / DSM 11121 / KW20 / Rd), this protein is ATP-dependent RNA helicase RhlB.